The following is a 120-amino-acid chain: Lysozyme (120 aa).

The C-type lysozyme domain occupies 1–120; it reads KRFTRCGLVN…NHSNPDISSC (120 aa). Intrachain disulfides connect Cys-6–Cys-120, Cys-27–Cys-110, Cys-62–Cys-76, and Cys-72–Cys-90. Residues Glu-32 and Asp-50 contribute to the active site.

This sequence belongs to the glycosyl hydrolase 22 family. In terms of assembly, monomer.

It carries out the reaction Hydrolysis of (1-&gt;4)-beta-linkages between N-acetylmuramic acid and N-acetyl-D-glucosamine residues in a peptidoglycan and between N-acetyl-D-glucosamine residues in chitodextrins.. Lysozymes have primarily a bacteriolytic function; those in tissues and body fluids are associated with the monocyte-macrophage system and enhance the activity of immunoagents. In Antheraea mylitta (Tasar silkworm), this protein is Lysozyme.